The sequence spans 94 residues: Small ribosomal subunit protein bS18 (94 aa).

A compositionally biased stretch (low complexity) spans 1–12; it reads MSEQNSRPQNSE. The disordered stretch occupies residues 1–29; it reads MSEQNSRPQNSERPQRSRRPQGGPRRRRK. Residues 16 to 29 show a composition bias toward basic residues; the sequence is RSRRPQGGPRRRRK.

The protein belongs to the bacterial ribosomal protein bS18 family. In terms of assembly, part of the 30S ribosomal subunit. Forms a tight heterodimer with protein bS6.

Its function is as follows. Binds as a heterodimer with protein bS6 to the central domain of the 16S rRNA, where it helps stabilize the platform of the 30S subunit. This chain is Small ribosomal subunit protein bS18, found in Leuconostoc citreum (strain KM20).